The following is a 242-amino-acid chain: Venom nerve growth factor (242 aa).

An N-terminal signal peptide occupies residues methionine 1–alanine 18. A propeptide spanning residues alanine 19–arginine 125 is cleaved from the precursor. The segment covering glycine 47 to aspartate 66 has biased composition (basic and acidic residues). Residues glycine 47–glycine 70 form a disordered region. 3 disulfides stabilise this stretch: cysteine 139/cysteine 203, cysteine 181/cysteine 231, and cysteine 191/cysteine 233. Asparagine 166 carries N-linked (GlcNAc...) asparagine glycosylation.

The protein belongs to the NGF-beta family. As to quaternary structure, homodimer; non-covalently linked. In terms of tissue distribution, expressed by the venom gland.

The protein resides in the secreted. In terms of biological role, nerve growth factor is important for the development and maintenance of the sympathetic and sensory nervous systems. It stimulates division and differentiation of sympathetic and embryonic sensory neurons as well as basal forebrain cholinergic neurons in the brain. Its relevance in the snake venom is not clear. However, it has been shown to inhibit metalloproteinase-dependent proteolysis of platelet glycoprotein Ib alpha, suggesting a metalloproteinase inhibition to prevent metalloprotease autodigestion and/or protection against prey proteases. Binds a lipid between the two protein chains in the homodimer. The lipid-bound form promotes histamine relase from mouse mast cells, contrary to the lipid-free form. This is Venom nerve growth factor from Drysdalia coronoides (White-lipped snake).